A 348-amino-acid polypeptide reads, in one-letter code: Holliday junction branch migration complex subunit RuvB (348 aa).

The tract at residues 4 to 184 is large ATPase domain (RuvB-L); that stretch reads ADRLIAASGR…FGIVQRLEFY (181 aa). ATP-binding positions include Ile23, Arg24, Gly65, Lys68, Thr69, Thr70, 131–133, Arg174, Tyr184, and Arg221; that span reads EDF. Residue Thr69 participates in Mg(2+) binding. Residues 185–255 form a small ATPAse domain (RuvB-S) region; sequence NDKDLSTIVS…VADMALNLLD (71 aa). Positions 258–348 are head domain (RuvB-H); it reads ERGFDHSDRR…GGDFSGPGDE (91 aa). DNA contacts are provided by Arg294, Arg313, and Arg318.

It belongs to the RuvB family. Homohexamer. Forms an RuvA(8)-RuvB(12)-Holliday junction (HJ) complex. HJ DNA is sandwiched between 2 RuvA tetramers; dsDNA enters through RuvA and exits via RuvB. An RuvB hexamer assembles on each DNA strand where it exits the tetramer. Each RuvB hexamer is contacted by two RuvA subunits (via domain III) on 2 adjacent RuvB subunits; this complex drives branch migration. In the full resolvosome a probable DNA-RuvA(4)-RuvB(12)-RuvC(2) complex forms which resolves the HJ.

The protein resides in the cytoplasm. It catalyses the reaction ATP + H2O = ADP + phosphate + H(+). Functionally, the RuvA-RuvB-RuvC complex processes Holliday junction (HJ) DNA during genetic recombination and DNA repair, while the RuvA-RuvB complex plays an important role in the rescue of blocked DNA replication forks via replication fork reversal (RFR). RuvA specifically binds to HJ cruciform DNA, conferring on it an open structure. The RuvB hexamer acts as an ATP-dependent pump, pulling dsDNA into and through the RuvAB complex. RuvB forms 2 homohexamers on either side of HJ DNA bound by 1 or 2 RuvA tetramers; 4 subunits per hexamer contact DNA at a time. Coordinated motions by a converter formed by DNA-disengaged RuvB subunits stimulates ATP hydrolysis and nucleotide exchange. Immobilization of the converter enables RuvB to convert the ATP-contained energy into a lever motion, pulling 2 nucleotides of DNA out of the RuvA tetramer per ATP hydrolyzed, thus driving DNA branch migration. The RuvB motors rotate together with the DNA substrate, which together with the progressing nucleotide cycle form the mechanistic basis for DNA recombination by continuous HJ branch migration. Branch migration allows RuvC to scan DNA until it finds its consensus sequence, where it cleaves and resolves cruciform DNA. This chain is Holliday junction branch migration complex subunit RuvB, found in Pseudomonas putida (strain ATCC 700007 / DSM 6899 / JCM 31910 / BCRC 17059 / LMG 24140 / F1).